The primary structure comprises 171 residues: 3-hydroxydecanoyl-[acyl-carrier-protein] dehydratase (171 aa).

Residue His-70 is part of the active site.

Belongs to the thioester dehydratase family. FabA subfamily. Homodimer.

It localises to the cytoplasm. The catalysed reaction is a (3R)-hydroxyacyl-[ACP] = a (2E)-enoyl-[ACP] + H2O. It carries out the reaction (3R)-hydroxydecanoyl-[ACP] = (2E)-decenoyl-[ACP] + H2O. The enzyme catalyses (2E)-decenoyl-[ACP] = (3Z)-decenoyl-[ACP]. The protein operates within lipid metabolism; fatty acid biosynthesis. Necessary for the introduction of cis unsaturation into fatty acids. Catalyzes the dehydration of (3R)-3-hydroxydecanoyl-ACP to E-(2)-decenoyl-ACP and then its isomerization to Z-(3)-decenoyl-ACP. Can catalyze the dehydratase reaction for beta-hydroxyacyl-ACPs with saturated chain lengths up to 16:0, being most active on intermediate chain length. The polypeptide is 3-hydroxydecanoyl-[acyl-carrier-protein] dehydratase (Shewanella loihica (strain ATCC BAA-1088 / PV-4)).